The sequence spans 427 residues: Citrate synthase (427 aa).

Residues histidine 306 and aspartate 363 contribute to the active site.

This sequence belongs to the citrate synthase family. Homohexamer.

It carries out the reaction oxaloacetate + acetyl-CoA + H2O = citrate + CoA + H(+). Its pathway is carbohydrate metabolism; tricarboxylic acid cycle; isocitrate from oxaloacetate: step 1/2. Its activity is regulated as follows. Allosterically inhibited by NADH. The chain is Citrate synthase (gltA) from Salmonella typhimurium (strain LT2 / SGSC1412 / ATCC 700720).